A 239-amino-acid chain; its full sequence is Probable transcriptional regulatory protein BBR47_14810 (239 aa).

Belongs to the TACO1 family. YeeN subfamily.

Its subcellular location is the cytoplasm. The polypeptide is Probable transcriptional regulatory protein BBR47_14810 (Brevibacillus brevis (strain 47 / JCM 6285 / NBRC 100599)).